A 182-amino-acid polypeptide reads, in one-letter code: RNA pyrophosphohydrolase (182 aa).

The Nudix hydrolase domain occupies 6–149; the sequence is GYRPNVGIIL…KRLVYEQALN (144 aa). Residues 38–59 carry the Nudix box motif; that stretch reads GGIKRGETPEEAMFRELYEEVG. Residues 162-182 form a disordered region; sequence PRHKKEQEPFSDVVDSVRSEE.

Belongs to the Nudix hydrolase family. RppH subfamily. The cofactor is a divalent metal cation.

Accelerates the degradation of transcripts by removing pyrophosphate from the 5'-end of triphosphorylated RNA, leading to a more labile monophosphorylated state that can stimulate subsequent ribonuclease cleavage. The sequence is that of RNA pyrophosphohydrolase from Dechloromonas aromatica (strain RCB).